We begin with the raw amino-acid sequence, 160 residues long: Ribosomal RNA large subunit methyltransferase H (160 aa).

Residues leucine 76, glycine 108, and 127 to 132 contribute to the S-adenosyl-L-methionine site; that span reads LGKMTW.

It belongs to the RNA methyltransferase RlmH family. In terms of assembly, homodimer.

The protein resides in the cytoplasm. The enzyme catalyses pseudouridine(1915) in 23S rRNA + S-adenosyl-L-methionine = N(3)-methylpseudouridine(1915) in 23S rRNA + S-adenosyl-L-homocysteine + H(+). Its function is as follows. Specifically methylates the pseudouridine at position 1915 (m3Psi1915) in 23S rRNA. The chain is Ribosomal RNA large subunit methyltransferase H from Sinorhizobium medicae (strain WSM419) (Ensifer medicae).